A 631-amino-acid chain; its full sequence is Chaperone protein HtpG (631 aa).

Residues 1 to 338 (MILKEQETLG…CNDLPLNISR (338 aa)) form an a; substrate-binding region. Residues 339–554 (EMLQHNRITQ…SNNMTTHMAK (216 aa)) form a b region. Residues 555–631 (LIVASGQNKP…KLLNHDTIVN (77 aa)) are c.

The protein belongs to the heat shock protein 90 family. Homodimer.

Its subcellular location is the cytoplasm. Functionally, molecular chaperone. Has ATPase activity. The protein is Chaperone protein HtpG of Baumannia cicadellinicola subsp. Homalodisca coagulata.